A 205-amino-acid chain; its full sequence is tRNA (pseudouridine(54)-N(1))-methyltransferase (205 aa).

Residues L136, G156, 179–184 (LSPLEL), and C189 contribute to the S-adenosyl-L-methionine site.

This sequence belongs to the methyltransferase superfamily. TrmY family. As to quaternary structure, homodimer.

The protein localises to the cytoplasm. It catalyses the reaction pseudouridine(54) in tRNA + S-adenosyl-L-methionine = N(1)-methylpseudouridine(54) in tRNA + S-adenosyl-L-homocysteine + H(+). In terms of biological role, specifically catalyzes the N1-methylation of pseudouridine at position 54 (Psi54) in tRNAs. The protein is tRNA (pseudouridine(54)-N(1))-methyltransferase of Methanocaldococcus jannaschii (strain ATCC 43067 / DSM 2661 / JAL-1 / JCM 10045 / NBRC 100440) (Methanococcus jannaschii).